A 122-amino-acid chain; its full sequence is UPF0102 protein R00337 (122 aa).

Belongs to the UPF0102 family.

The polypeptide is UPF0102 protein R00337 (Rhizobium meliloti (strain 1021) (Ensifer meliloti)).